Consider the following 702-residue polypeptide: 1,4-alpha-glucan-branching enzyme (702 aa).

Residue Ala2 is modified to N-acetylalanine. Substrate is bound by residues 62–63 (NE) and 91–93 (WAP). Trp107 is a binding site for (1,4-alpha-D-glucosyl)n. 118–121 (EYGK) contributes to the substrate binding site. (1,4-alpha-D-glucosyl)n is bound at residue Lys143. A Phosphotyrosine modification is found at Tyr173. 333–336 (EVLR) contacts substrate. Asp357 serves as the catalytic Nucleophile. Glu412 serves as the catalytic Proton donor.

It belongs to the glycosyl hydrolase 13 family. GlgB subfamily. In terms of assembly, monomer.

It carries out the reaction Transfers a segment of a (1-&gt;4)-alpha-D-glucan chain to a primary hydroxy group in a similar glucan chain.. Its pathway is glycan biosynthesis; glycogen biosynthesis. Its function is as follows. Glycogen-branching enzyme participates in the glycogen biosynthetic process along with glycogenin and glycogen synthase. Generates alpha-1,6-glucosidic branches from alpha-1,4-linked glucose chains, to increase solubility of the glycogen polymer. The protein is 1,4-alpha-glucan-branching enzyme (Gbe1) of Mus musculus (Mouse).